The primary structure comprises 70 residues: Large ribosomal subunit protein bL31 (70 aa).

Positions 16, 18, 37, and 40 each coordinate Zn(2+).

The protein belongs to the bacterial ribosomal protein bL31 family. Type A subfamily. As to quaternary structure, part of the 50S ribosomal subunit. Zn(2+) is required as a cofactor.

In terms of biological role, binds the 23S rRNA. This Alteromonas mediterranea (strain DSM 17117 / CIP 110805 / LMG 28347 / Deep ecotype) protein is Large ribosomal subunit protein bL31.